Here is a 431-residue protein sequence, read N- to C-terminus: Urokinase-type plasminogen activator (431 aa).

The signal sequence occupies residues 1 to 20 (MRALLARLLLCVLVVSDSKG). The region spanning 27–63 (VPSNCDCLNGGTCVSNKYFSNIHWCNCPKKFGGQHCE) is the EGF-like domain. 6 disulfides stabilise this stretch: Cys-31-Cys-39, Cys-33-Cys-51, Cys-53-Cys-62, Cys-70-Cys-151, Cys-91-Cys-133, and Cys-122-Cys-146. The tract at residues 34-57 (LNGGTCVSNKYFSNIHWCNCPKKF) is binds urokinase plasminogen activator surface receptor. The Kringle domain occupies 69–151 (TCYEGNGHFY…LVQECMVHDC (83 aa)). The tract at residues 152-178 (ADGKKPSSPPEELKFQCGQKTLRPRFK) is connecting peptide. Ser-158 is subject to Phosphoserine. 6 disulfides stabilise this stretch: Cys-168–Cys-299, Cys-209–Cys-225, Cys-217–Cys-288, Cys-313–Cys-382, Cys-345–Cys-361, and Cys-372–Cys-400. One can recognise a Peptidase S1 domain in the interval 179 to 424 (IVGGEFTTIE…FLPWIRSHTK (246 aa)). Active-site charge relay system residues include His-224 and Asp-275. A glycan (N-linked (GlcNAc...) asparagine) is linked at Asn-322. At Ser-323 the chain carries Phosphoserine. Catalysis depends on Ser-376, which acts as the Charge relay system.

It belongs to the peptidase S1 family. In terms of assembly, found in high and low molecular mass forms. Each consists of two chains, A and B. The high molecular mass form contains a long chain A which is cleaved to yield a short chain A. Forms heterodimer with SERPINA5. Binds LRP1B; binding is followed by internalization and degradation. Interacts with MRC2. Interacts with PLAUR. In complex with SERPINE1, interacts with PLAUR/uPAR. Interacts with SORL1 and LRP1, either alone or in complex with SERPINE1; these interactions are abolished in the presence of LRPAP1/RAP. The ternary complex composed of PLAUR-PLAU-PAI1 also interacts with SORLA. In terms of processing, phosphorylation of Ser-158 and Ser-323 abolishes proadhesive ability but does not interfere with receptor binding. Produced as an inactive single-chain protein (pro-uPA or sc-uPA), is processed into the active disulfide-linked two-chain form of PLAU/uPA by a proteolytic event mediated, at least, by TMPRSS4.

The protein localises to the secreted. The catalysed reaction is Specific cleavage of Arg-|-Val bond in plasminogen to form plasmin.. Its activity is regulated as follows. Inhibited by SERPINA5. Inhibited by SERPINE1. Specifically cleaves the zymogen plasminogen to form the active enzyme plasmin. This is Urokinase-type plasminogen activator (PLAU) from Pongo abelii (Sumatran orangutan).